An 86-amino-acid polypeptide reads, in one-letter code: Large ribosomal subunit protein bL31B (86 aa).

This sequence belongs to the bacterial ribosomal protein bL31 family. Type B subfamily. In terms of assembly, part of the 50S ribosomal subunit.

In Vibrio vulnificus (strain CMCP6), this protein is Large ribosomal subunit protein bL31B.